The chain runs to 546 residues: Probable acyl-activating enzyme 21 (546 aa).

The protein belongs to the ATP-dependent AMP-binding enzyme family.

Functionally, may act as an acid--thiol ligase that activates carboxylic acids by forming acyl-CoAs. This is Probable acyl-activating enzyme 21 (AEE21) from Arabidopsis thaliana (Mouse-ear cress).